Consider the following 434-residue polypeptide: Ribosomal protein uS12 methylthiotransferase RimO (434 aa).

The 111-residue stretch at 2-112 folds into the MTTase N-terminal domain; the sequence is AKIGFVSLGC…VLEAVQEVLP (111 aa). Residues cysteine 11, cysteine 47, cysteine 76, cysteine 142, cysteine 146, and cysteine 149 each coordinate [4Fe-4S] cluster. The region spanning 128–365 is the Radical SAM core domain; that stretch reads LTPRHYAYVK…LEVQARVSLR (238 aa). A TRAM domain is found at 368–434; that stretch reads QRFVGKTLEV…DTYDLHGVQA (67 aa).

It belongs to the methylthiotransferase family. RimO subfamily. It depends on [4Fe-4S] cluster as a cofactor.

The protein resides in the cytoplasm. The enzyme catalyses L-aspartate(89)-[ribosomal protein uS12]-hydrogen + (sulfur carrier)-SH + AH2 + 2 S-adenosyl-L-methionine = 3-methylsulfanyl-L-aspartate(89)-[ribosomal protein uS12]-hydrogen + (sulfur carrier)-H + 5'-deoxyadenosine + L-methionine + A + S-adenosyl-L-homocysteine + 2 H(+). Catalyzes the methylthiolation of an aspartic acid residue of ribosomal protein uS12. The polypeptide is Ribosomal protein uS12 methylthiotransferase RimO (Thermus thermophilus (strain ATCC BAA-163 / DSM 7039 / HB27)).